Reading from the N-terminus, the 448-residue chain is Carbon catabolite repressor protein 4 homolog 3 (448 aa).

Over residues 50 to 67 (SSTSGPSDSNPESSSNRS) the composition is skewed to low complexity. A disordered region spans residues 50–92 (SSTSGPSDSNPESSSNRSYSRRWQNPLPRRQHPDQIPSSQIAR). E162 provides a ligand contact to Mg(2+).

It belongs to the CCR4/nocturin family. Component of the CCR4-NOT complex, at least composed of CRR4 and CAF1 proteins. The cofactor is Mg(2+).

The protein resides in the nucleus. The protein localises to the cytoplasm. The catalysed reaction is Exonucleolytic cleavage of poly(A) to 5'-AMP.. Functionally, acts as a catalytic component of the CCR4-NOT core complex, which in the nucleus seems to be a general transcription factor, and in the cytoplasm the major mRNA deadenylase involved in mRNA turnover. This Arabidopsis thaliana (Mouse-ear cress) protein is Carbon catabolite repressor protein 4 homolog 3 (CCR4-3).